The chain runs to 426 residues: Histidine--tRNA ligase (426 aa).

Belongs to the class-II aminoacyl-tRNA synthetase family. Homodimer.

The protein localises to the cytoplasm. The catalysed reaction is tRNA(His) + L-histidine + ATP = L-histidyl-tRNA(His) + AMP + diphosphate + H(+). The protein is Histidine--tRNA ligase of Streptococcus pyogenes serotype M3 (strain ATCC BAA-595 / MGAS315).